A 406-amino-acid polypeptide reads, in one-letter code: Probable tRNA pseudouridine synthase D (406 aa).

Aspartate 77 (nucleophile) is an active-site residue. Positions 150–371 (GFPNYFGIQR…PGGRRELLIK (222 aa)) constitute a TRUD domain.

The protein belongs to the pseudouridine synthase TruD family.

It carries out the reaction uridine(13) in tRNA = pseudouridine(13) in tRNA. Could be responsible for synthesis of pseudouridine from uracil-13 in transfer RNAs. The polypeptide is Probable tRNA pseudouridine synthase D (Pyrococcus abyssi (strain GE5 / Orsay)).